Consider the following 328-residue polypeptide: MPLHHLTRFPRLELIGAPTPLEYLPRLSDYLGREIYIKRDDVTPIAMGGNKLRKLEFLVADALREGADTLITAGAIQSNHVRQTAAVAAKLGLHCVALLENPIGTTAENYLTNGNRLLLDLFNTQIEMCDALTDPDAQLQTLATRIEAQGFRPYVIPVGGSSALGAMGYVESALEIAQQCEEVVGLSSVVVASGSAGTHAGLAVGLEHLMPDVELIGVTVSRSVAEQKPKVIALQQAIAGQLALTATADIHLWDDYFAPGYGVPNDAGMEAVKLLASLEGVLLDPVYTGKAMAGLIDGISQKRFNDDGPILFIHTGGAPALFAYHPHV.

The residue at position 51 (K51) is an N6-(pyridoxal phosphate)lysine.

This sequence belongs to the ACC deaminase/D-cysteine desulfhydrase family. In terms of assembly, homodimer. Requires pyridoxal 5'-phosphate as cofactor.

It carries out the reaction D-cysteine + H2O = hydrogen sulfide + pyruvate + NH4(+) + H(+). Catalyzes the alpha,beta-elimination reaction of D-cysteine and of several D-cysteine derivatives. It could be a defense mechanism against D-cysteine. In Salmonella agona (strain SL483), this protein is D-cysteine desulfhydrase.